The sequence spans 189 residues: ATP synthase subunit b (189 aa).

The chain crosses the membrane as a helical span at residues 38 to 58; that stretch reads PMFLATLIAFILVVLILWFLL.

This sequence belongs to the ATPase B chain family. In terms of assembly, F-type ATPases have 2 components, F(1) - the catalytic core - and F(0) - the membrane proton channel. F(1) has five subunits: alpha(3), beta(3), gamma(1), delta(1), epsilon(1). F(0) has three main subunits: a(1), b(2) and c(10-14). The alpha and beta chains form an alternating ring which encloses part of the gamma chain. F(1) is attached to F(0) by a central stalk formed by the gamma and epsilon chains, while a peripheral stalk is formed by the delta and b chains.

It localises to the cell membrane. Its function is as follows. F(1)F(0) ATP synthase produces ATP from ADP in the presence of a proton or sodium gradient. F-type ATPases consist of two structural domains, F(1) containing the extramembraneous catalytic core and F(0) containing the membrane proton channel, linked together by a central stalk and a peripheral stalk. During catalysis, ATP synthesis in the catalytic domain of F(1) is coupled via a rotary mechanism of the central stalk subunits to proton translocation. Functionally, component of the F(0) channel, it forms part of the peripheral stalk, linking F(1) to F(0). The polypeptide is ATP synthase subunit b (Mycoplasmopsis agalactiae (strain NCTC 10123 / CIP 59.7 / PG2) (Mycoplasma agalactiae)).